The chain runs to 1755 residues: Transposon Ty1-DR5 Gag-Pol polyprotein (1755 aa).

Composition is skewed to polar residues over residues 1 to 10, 48 to 60, and 127 to 152; these read MESQQLSNYP, TKANSQQTTTPAS, and QSQFPQYPSSVGTPLSTPSPESGNTF. Disordered stretches follow at residues 1 to 93, 126 to 173, and 352 to 421; these read MESQ…MMTQ, PQSQ…RPPP, and GSRN…SKST. Over residues 153 to 165 the composition is skewed to low complexity; it reads TDSSSADSDMTST. Residues 299-401 form an RNA-binding region; that stretch reads NNGIHINNKV…NSKSKTARAH (103 aa). Over residues 402 to 418 the composition is skewed to low complexity; sequence NVSTSNNSPSTDNDSIS. Aspartate 461 functions as the For protease activity; shared with dimeric partner in the catalytic mechanism. The interval 583 to 640 is integrase-type zinc finger-like; that stretch reads NVHTSESTRKYPYPFIHRMLAHANAQTIRYSLKNNTITYFNESDVDWSSAIDYQCPDC. Residues 660–835 enclose the Integrase catalytic domain; that stretch reads NSYEPFQYLH…AGLDISTLLP (176 aa). Aspartate 671 and aspartate 736 together coordinate Mg(2+). 3 disordered regions span residues 956–1087, 1092–1111, and 1130–1187; these read SKAV…ETEK, RSPSIDASPPENNSSHNIVP, and DLPL…DNET. Positions 960 to 969 are enriched in low complexity; sequence SPTDSTPPST. The segment covering 1005-1015 has biased composition (polar residues); it reads STPQISNIEST. Residues 1038–1053 show a composition bias toward basic and acidic residues; sequence ESSHASKSKDFRHSDS. 2 stretches are compositionally biased toward polar residues: residues 1054–1082 and 1101–1111; these read YSENETNHTNVPISSTGGTNNKTVPQISD and PENNSSHNIVP. The Bipartite nuclear localization signal signature appears at 1178–1212; that stretch reads KKRSLEDNETEIKVSRDTWNTKNMRSLEPPRSKKR. Residues 1338–1476 form the Reverse transcriptase Ty1/copia-type domain; that stretch reads NNYYITQLDI…DILGLEIKYQ (139 aa). Mg(2+) is bound by residues aspartate 1346, aspartate 1427, aspartate 1428, aspartate 1610, glutamate 1652, and aspartate 1685. Residues 1610–1752 enclose the RNase H Ty1/copia-type domain; that stretch reads DASYGNQPYY…IKTFKLLTNK (143 aa).

As to quaternary structure, the capsid protein forms a homotrimer, from which the VLPs are assembled. The protease is a homodimer, whose active site consists of two apposed aspartic acid residues. Initially, virus-like particles (VLPs) are composed of the structural unprocessed proteins Gag and Gag-Pol, and also contain the host initiator methionine tRNA (tRNA(i)-Met) which serves as a primer for minus-strand DNA synthesis, and a dimer of genomic Ty RNA. Processing of the polyproteins occurs within the particle and proceeds by an ordered pathway, called maturation. First, the protease (PR) is released by autocatalytic cleavage of the Gag-Pol polyprotein yielding capsid protein p45 and a Pol-p154 precursor protein. This cleavage is a prerequisite for subsequent processing of Pol-p154 at the remaining sites to release the mature structural and catalytic proteins. Maturation takes place prior to the RT reaction and is required to produce transposition-competent VLPs.

Its subcellular location is the cytoplasm. It localises to the nucleus. The catalysed reaction is DNA(n) + a 2'-deoxyribonucleoside 5'-triphosphate = DNA(n+1) + diphosphate. It catalyses the reaction Endonucleolytic cleavage to 5'-phosphomonoester.. Capsid protein (CA) is the structural component of the virus-like particle (VLP), forming the shell that encapsulates the retrotransposons dimeric RNA genome. The particles are assembled from trimer-clustered units and there are holes in the capsid shells that allow for the diffusion of macromolecules. CA also has nucleocapsid-like chaperone activity, promoting primer tRNA(i)-Met annealing to the multipartite primer-binding site (PBS), dimerization of Ty1 RNA and initiation of reverse transcription. Functionally, the aspartyl protease (PR) mediates the proteolytic cleavages of the Gag and Gag-Pol polyproteins after assembly of the VLP. Its function is as follows. Reverse transcriptase/ribonuclease H (RT) is a multifunctional enzyme that catalyzes the conversion of the retro-elements RNA genome into dsDNA within the VLP. The enzyme displays a DNA polymerase activity that can copy either DNA or RNA templates, and a ribonuclease H (RNase H) activity that cleaves the RNA strand of RNA-DNA heteroduplexes during plus-strand synthesis and hydrolyzes RNA primers. The conversion leads to a linear dsDNA copy of the retrotransposon that includes long terminal repeats (LTRs) at both ends. In terms of biological role, integrase (IN) targets the VLP to the nucleus, where a subparticle preintegration complex (PIC) containing at least integrase and the newly synthesized dsDNA copy of the retrotransposon must transit the nuclear membrane. Once in the nucleus, integrase performs the integration of the dsDNA into the host genome. The chain is Transposon Ty1-DR5 Gag-Pol polyprotein (TY1B-DR5) from Saccharomyces cerevisiae (strain ATCC 204508 / S288c) (Baker's yeast).